Consider the following 469-residue polypeptide: Adenosylhomocysteinase (469 aa).

Substrate-binding residues include threonine 63, aspartate 139, and glutamate 164. An NAD(+)-binding site is contributed by 165–167 (TTT). Residues lysine 194 and aspartate 198 each contribute to the substrate site. Residues asparagine 199, 228-233 (GYGDVG), glutamate 251, asparagine 300, 321-323 (IGH), and asparagine 375 contribute to the NAD(+) site.

It belongs to the adenosylhomocysteinase family. The cofactor is NAD(+).

It is found in the cytoplasm. The catalysed reaction is S-adenosyl-L-homocysteine + H2O = L-homocysteine + adenosine. The protein operates within amino-acid biosynthesis; L-homocysteine biosynthesis; L-homocysteine from S-adenosyl-L-homocysteine: step 1/1. Its function is as follows. May play a key role in the regulation of the intracellular concentration of adenosylhomocysteine. The chain is Adenosylhomocysteinase from Pseudomonas aeruginosa (strain UCBPP-PA14).